The chain runs to 410 residues: Peptidase T (410 aa).

Position 79 (H79) interacts with Zn(2+). Residue D81 is part of the active site. Residue D142 participates in Zn(2+) binding. Residue E176 is the Proton acceptor of the active site. The Zn(2+) site is built by E177, D199, and H381.

Belongs to the peptidase M20B family. It depends on Zn(2+) as a cofactor.

Its subcellular location is the cytoplasm. The catalysed reaction is Release of the N-terminal residue from a tripeptide.. Its function is as follows. Cleaves the N-terminal amino acid of tripeptides. This chain is Peptidase T, found in Bacillus cereus (strain G9842).